Here is a 126-residue protein sequence, read N- to C-terminus: Glycine cleavage system H protein (126 aa).

The 83-residue stretch at 22–104 (VATIGITEYA…YEKAWMVKVE (83 aa)) folds into the Lipoyl-binding domain. K63 carries the post-translational modification N6-lipoyllysine.

It belongs to the GcvH family. In terms of assembly, the glycine cleavage system is composed of four proteins: P, T, L and H. The cofactor is (R)-lipoate.

Functionally, the glycine cleavage system catalyzes the degradation of glycine. The H protein shuttles the methylamine group of glycine from the P protein to the T protein. In terms of biological role, is also involved in protein lipoylation via its role as an octanoyl/lipoyl carrier protein intermediate. This chain is Glycine cleavage system H protein, found in Staphylococcus aureus (strain MSSA476).